We begin with the raw amino-acid sequence, 182 residues long: UPF0215 protein Pcal_0119 (182 aa).

The protein belongs to the UPF0215 family.

The polypeptide is UPF0215 protein Pcal_0119 (Pyrobaculum calidifontis (strain DSM 21063 / JCM 11548 / VA1)).